The chain runs to 77 residues: Pollen allergen Amb p 5b (77 aa).

Residues 1–22 form the signal peptide; it reads MNNEKNVSFEFIGSTNEVDEIK. 3 cysteine pairs are disulfide-bonded: Cys-26-Cys-61, Cys-33-Cys-48, and Cys-40-Cys-54.

The protein resides in the secreted. This Ambrosia psilostachya (Western ragweed) protein is Pollen allergen Amb p 5b.